A 105-amino-acid chain; its full sequence is Transcription factor S (105 aa).

Residues Cys5, Cys8, Cys21, Cys24, Cys66, Cys69, Cys94, and Cys97 each contribute to the Zn(2+) site. A C4-type zinc finger spans residues 5–24 (CPKCNNIMLPKNGRLKCTVC). The segment at 62-102 (TRIECPSCGNMEASWWLQQTRCADEPETRFYKCKKCGHTWR) adopts a TFIIS-type zinc-finger fold.

Belongs to the archaeal RpoM/eukaryotic RPA12/RPB9/RPC11 RNA polymerase family.

In terms of biological role, induces RNA cleavage activity in the RNA polymerase. In its presence, the cleavage activity of the RNA polymerase truncates the RNA back to position +15 in a stepwise manner by releasing mainly dinucleotides from the 3'-end of the nascent RNA. The truncated RNAs are able to continue elongation. Involved in transcriptional proofreading and fidelity. Misincorporation of nucleotides during elongation of transcription leads to arrested elongation complexes which are rescued by TFS-promoted removal of a dinucleotide from the 3'-end. TFS is able to induce a cleavage resynthesis cycle in stalled elongation complexes (resulting from the next missing nucleotide or a reduced incorporation rate of a wrong nucleotide) preventing misincorporation and enabling proofreading in a post-incorporation manner. Pausing of elongation complexes is the main determinant of TFS-induced RNA cleavage. This is Transcription factor S from Methanothermococcus thermolithotrophicus (Methanococcus thermolithotrophicus).